Reading from the N-terminus, the 333-residue chain is N-acetyl-gamma-glutamyl-phosphate reductase (333 aa).

Cys-145 is a catalytic residue.

Belongs to the NAGSA dehydrogenase family. Type 1 subfamily.

It localises to the cytoplasm. It carries out the reaction N-acetyl-L-glutamate 5-semialdehyde + phosphate + NADP(+) = N-acetyl-L-glutamyl 5-phosphate + NADPH + H(+). Its pathway is amino-acid biosynthesis; L-arginine biosynthesis; N(2)-acetyl-L-ornithine from L-glutamate: step 3/4. Functionally, catalyzes the NADPH-dependent reduction of N-acetyl-5-glutamyl phosphate to yield N-acetyl-L-glutamate 5-semialdehyde. The chain is N-acetyl-gamma-glutamyl-phosphate reductase from Salinispora arenicola (strain CNS-205).